Consider the following 411-residue polypeptide: Phospholipase ABHD3 (411 aa).

A helical; Signal-anchor for type II membrane protein membrane pass occupies residues 25 to 45 (VGFFGSGVGFSLILGFSVAYA). The AB hydrolase-1 domain occupies 140–247 (PTVLLLPGLT…PLKAAATFSV (108 aa)). Active-site charge relay system residues include Ser220, Asp346, and His375.

It belongs to the AB hydrolase superfamily. AB hydrolase 4 family.

It is found in the membrane. It catalyses the reaction a 1,2-diacyl-sn-glycero-3-phosphocholine + H2O = a 1-acyl-sn-glycero-3-phosphocholine + a fatty acid + H(+). The catalysed reaction is a 1,2-diacyl-sn-glycero-3-phosphocholine + H2O = a 2-acyl-sn-glycero-3-phosphocholine + a fatty acid + H(+). It carries out the reaction 1-tetradecanoyl-2-(9Z,12Z-octadecadienoyl)-sn-glycero-3-phosphocholine + H2O = 2-(9Z,12Z-octadecadienoyl)-sn-glycero-3-phosphocholine + tetradecanoate + H(+). The enzyme catalyses 1-tetradecanoyl-2-(9Z,12Z-octadecadienoyl)-sn-glycero-3-phosphocholine + H2O = 1-tetradecanoyl-sn-glycero-3-phosphocholine + (9Z,12Z)-octadecadienoate + H(+). It catalyses the reaction 1-tetradecanoyl-2-(5Z,8Z,11Z,14Z-eicosatetraenoyl)-sn-glycero-3-phosphocholine + H2O = 2-(5Z,8Z,11Z,14Z)-eicosatetraenoyl-sn-glycero-3-phosphocholine + tetradecanoate + H(+). The catalysed reaction is 1-tetradecanoyl-2-(4Z,7Z,10Z,13Z,16Z,19Z-docosahexaenoyl)-sn-glycero-3-phosphocholine + H2O = 2-(4Z,7Z,10Z,13Z,16Z,19Z-docosahexaenoyl)-sn-glycero-3-phosphocholine + tetradecanoate + H(+). It carries out the reaction 1,2-ditetradecanoyl-sn-glycero-3-phosphocholine + H2O = 2-tetradecanoyl-sn-glycero-3-phosphocholine + tetradecanoate + H(+). The enzyme catalyses 1-octadecanoyl-2-acetyl-sn-glycero-3-phosphocholine + H2O = 1-octadecanoyl-sn-glycero-3-phosphocholine + acetate + H(+). It catalyses the reaction 1,2-ditetradecanoyl-sn-glycero-3-phosphocholine + H2O = 1-tetradecanoyl-sn-glycero-3-phosphocholine + tetradecanoate + H(+). The catalysed reaction is 1-octadecanoyl-2-pentanoyl-sn-glycero-3-phosphocholine + H2O = pentanoate + 1-octadecanoyl-sn-glycero-3-phosphocholine + H(+). It carries out the reaction 1-octadecanoyl-2-hexanoyl-sn-glycero-3-phosphocholine + H2O = hexanoate + 1-octadecanoyl-sn-glycero-3-phosphocholine + H(+). The enzyme catalyses 1-octadecanoyl-2-octanoyl-sn-glycero-3-phosphocholine + H2O = 1-octadecanoyl-sn-glycero-3-phosphocholine + octanoate + H(+). It catalyses the reaction 1-octadecanoyl-2-nonanoyl-sn-glycero-3-phosphocholine + H2O = nonanoate + 1-octadecanoyl-sn-glycero-3-phosphocholine + H(+). The catalysed reaction is 1-O-hexadecyl-2-nonadioyl-sn-glycero-3-phosphocholine + H2O = nonanedioate + 1-O-hexadecyl-sn-glycero-3-phosphocholine + H(+). It carries out the reaction 1-hexadecanoyl-2-nonadioyl-sn-glycero-3-phosphocholine + H2O = nonanedioate + 1-hexadecanoyl-sn-glycero-3-phosphocholine + H(+). The enzyme catalyses 1-hexadecanoyl-2-(9-oxononanoyl)-sn-glycero-3-phosphocholine + H2O = 9-oxononanoate + 1-hexadecanoyl-sn-glycero-3-phosphocholine + H(+). It catalyses the reaction 1-hexadecanoyl-2-(5-oxopentanoyl)-sn-glycero-3-phosphocholine + H2O = 5-oxopentanoate + 1-hexadecanoyl-sn-glycero-3-phosphocholine + H(+). The catalysed reaction is 1-hexadecanoyl-2-glutaroyl-sn-glycero-3-phosphocholine + H2O = glutarate + 1-hexadecanoyl-sn-glycero-3-phosphocholine + H(+). It carries out the reaction 1-O-hexadecyl-2-acetyl-sn-glycero-3-phosphocholine + H2O = 1-O-hexadecyl-sn-glycero-3-phosphocholine + acetate + H(+). Its function is as follows. Phospholipase that may play a role in phospholipids remodeling. May selectively cleave myristate (C14)-containing phosphatidylcholines through its predominant phospholipase 1 activity, cleaving preferentially acyl groups in sn1 position. In parallel, may have a minor phospholipase 2 activity acting on acyl groups in position sn2. In addition to (C14)-containing phosphatidylcholines, may also act on other medium-chain-containing and oxidatively truncated phospholipids. This chain is Phospholipase ABHD3, found in Bos taurus (Bovine).